The sequence spans 501 residues: Tegument protein US24 (501 aa).

This sequence belongs to the herpesviridae US22 family.

Its subcellular location is the virion tegument. This is Tegument protein US24 (US24) from Human cytomegalovirus (strain Merlin) (HHV-5).